Reading from the N-terminus, the 285-residue chain is Putative ABC transporter ATP-binding protein CPE0195 (285 aa).

The ABC transporter domain occupies 6-242 (LKVEELNYNY…KEVIRKVNLR (237 aa)). ATP is bound at residue 39–46 (GGNGVGKS).

Belongs to the ABC transporter superfamily.

It localises to the cell membrane. Its function is as follows. Probably part of an ABC transporter complex. Responsible for energy coupling to the transport system. The chain is Putative ABC transporter ATP-binding protein CPE0195 from Clostridium perfringens (strain 13 / Type A).